Consider the following 669-residue polypeptide: UvrABC system protein B (669 aa).

The Helicase ATP-binding domain occupies 27 to 414 (ESLQGEHKFQ…EARVIEQVIR (388 aa)). 40–47 (GATGTGKT) lines the ATP pocket. The Beta-hairpin motif lies at 93 to 116 (YYDYYQPEAYIPVTDTYIEKTASI). In terms of domain architecture, Helicase C-terminal spans 431–597 (QVDDLYGEIQ…PINKRANNAI (167 aa)). One can recognise a UVR domain in the interval 628–663 (PDLIQQLEEKMQEAAKKQEFEVAAIYRDRIQHLRDR).

This sequence belongs to the UvrB family. Forms a heterotetramer with UvrA during the search for lesions. Interacts with UvrC in an incision complex.

The protein resides in the cytoplasm. Functionally, the UvrABC repair system catalyzes the recognition and processing of DNA lesions. A damage recognition complex composed of 2 UvrA and 2 UvrB subunits scans DNA for abnormalities. Upon binding of the UvrA(2)B(2) complex to a putative damaged site, the DNA wraps around one UvrB monomer. DNA wrap is dependent on ATP binding by UvrB and probably causes local melting of the DNA helix, facilitating insertion of UvrB beta-hairpin between the DNA strands. Then UvrB probes one DNA strand for the presence of a lesion. If a lesion is found the UvrA subunits dissociate and the UvrB-DNA preincision complex is formed. This complex is subsequently bound by UvrC and the second UvrB is released. If no lesion is found, the DNA wraps around the other UvrB subunit that will check the other stand for damage. This Synechocystis sp. (strain ATCC 27184 / PCC 6803 / Kazusa) protein is UvrABC system protein B.